Reading from the N-terminus, the 322-residue chain is 4-hydroxy-3-methylbut-2-enyl diphosphate reductase (322 aa).

Residue C15 participates in [4Fe-4S] cluster binding. Residues H44 and H77 each coordinate (2E)-4-hydroxy-3-methylbut-2-enyl diphosphate. 2 residues coordinate dimethylallyl diphosphate: H44 and H77. Isopentenyl diphosphate-binding residues include H44 and H77. C99 is a [4Fe-4S] cluster binding site. Residue H127 participates in (2E)-4-hydroxy-3-methylbut-2-enyl diphosphate binding. H127 is a binding site for dimethylallyl diphosphate. H127 is an isopentenyl diphosphate binding site. The active-site Proton donor is the E129. Residue T168 participates in (2E)-4-hydroxy-3-methylbut-2-enyl diphosphate binding. C198 provides a ligand contact to [4Fe-4S] cluster. (2E)-4-hydroxy-3-methylbut-2-enyl diphosphate is bound by residues S226, S227, N228, and S270. Residues S226, S227, N228, and S270 each contribute to the dimethylallyl diphosphate site. Isopentenyl diphosphate is bound by residues S226, S227, N228, and S270.

This sequence belongs to the IspH family. [4Fe-4S] cluster serves as cofactor.

It catalyses the reaction isopentenyl diphosphate + 2 oxidized [2Fe-2S]-[ferredoxin] + H2O = (2E)-4-hydroxy-3-methylbut-2-enyl diphosphate + 2 reduced [2Fe-2S]-[ferredoxin] + 2 H(+). It carries out the reaction dimethylallyl diphosphate + 2 oxidized [2Fe-2S]-[ferredoxin] + H2O = (2E)-4-hydroxy-3-methylbut-2-enyl diphosphate + 2 reduced [2Fe-2S]-[ferredoxin] + 2 H(+). The protein operates within isoprenoid biosynthesis; dimethylallyl diphosphate biosynthesis; dimethylallyl diphosphate from (2E)-4-hydroxy-3-methylbutenyl diphosphate: step 1/1. It functions in the pathway isoprenoid biosynthesis; isopentenyl diphosphate biosynthesis via DXP pathway; isopentenyl diphosphate from 1-deoxy-D-xylulose 5-phosphate: step 6/6. Its function is as follows. Catalyzes the conversion of 1-hydroxy-2-methyl-2-(E)-butenyl 4-diphosphate (HMBPP) into a mixture of isopentenyl diphosphate (IPP) and dimethylallyl diphosphate (DMAPP). Acts in the terminal step of the DOXP/MEP pathway for isoprenoid precursor biosynthesis. This is 4-hydroxy-3-methylbut-2-enyl diphosphate reductase from Neisseria meningitidis serogroup A / serotype 4A (strain DSM 15465 / Z2491).